The sequence spans 137 residues: Ribosomal RNA large subunit methyltransferase H (137 aa).

Residues leucine 56, glycine 85, and 104 to 109 contribute to the S-adenosyl-L-methionine site; that span reads LSPLTF.

This sequence belongs to the RNA methyltransferase RlmH family. In terms of assembly, homodimer.

It localises to the cytoplasm. It catalyses the reaction pseudouridine(1915) in 23S rRNA + S-adenosyl-L-methionine = N(3)-methylpseudouridine(1915) in 23S rRNA + S-adenosyl-L-homocysteine + H(+). Functionally, specifically methylates the pseudouridine at position 1915 (m3Psi1915) in 23S rRNA. This is Ribosomal RNA large subunit methyltransferase H from Prochlorococcus marinus (strain MIT 9515).